We begin with the raw amino-acid sequence, 319 residues long: NADH-quinone oxidoreductase subunit H 1 (319 aa).

A run of 9 helical transmembrane segments spans residues 1–21 (MIGL…LLVV), 77–97 (ILAP…VAFG), 107–127 (VGVL…MLGA), 147–167 (LAYE…AGSL), 179–199 (VWFV…GVAA), 214–234 (LVAG…FLGE), 238–258 (VLLV…GPWL), 262–282 (IWFG…RATL), and 293–313 (FAWK…GIVV).

This sequence belongs to the complex I subunit 1 family. As to quaternary structure, NDH-1 is composed of 14 different subunits. Subunits NuoA, H, J, K, L, M, N constitute the membrane sector of the complex.

It is found in the cell inner membrane. The catalysed reaction is a quinone + NADH + 5 H(+)(in) = a quinol + NAD(+) + 4 H(+)(out). In terms of biological role, NDH-1 shuttles electrons from NADH, via FMN and iron-sulfur (Fe-S) centers, to quinones in the respiratory chain. The immediate electron acceptor for the enzyme in this species is believed to be ubiquinone. Couples the redox reaction to proton translocation (for every two electrons transferred, four hydrogen ions are translocated across the cytoplasmic membrane), and thus conserves the redox energy in a proton gradient. This subunit may bind ubiquinone. The protein is NADH-quinone oxidoreductase subunit H 1 of Rhodopseudomonas palustris (strain HaA2).